The chain runs to 874 residues: Alanine--tRNA ligase (874 aa).

Positions 562, 566, 664, and 668 each coordinate Zn(2+).

Belongs to the class-II aminoacyl-tRNA synthetase family. The cofactor is Zn(2+).

It localises to the cytoplasm. The catalysed reaction is tRNA(Ala) + L-alanine + ATP = L-alanyl-tRNA(Ala) + AMP + diphosphate. Functionally, catalyzes the attachment of alanine to tRNA(Ala) in a two-step reaction: alanine is first activated by ATP to form Ala-AMP and then transferred to the acceptor end of tRNA(Ala). Also edits incorrectly charged Ser-tRNA(Ala) and Gly-tRNA(Ala) via its editing domain. The protein is Alanine--tRNA ligase of Neisseria meningitidis serogroup C / serotype 2a (strain ATCC 700532 / DSM 15464 / FAM18).